Reading from the N-terminus, the 442-residue chain is MSDSTQFSLFDSGDDEPAKVTAPKRKVARKKRSSSSSDDAISISELTRQIKSTVESGFPGVWVAGEITDIARPRSGHLYFTLKDERSQIRGVMWRSVAERLPFELDDGQSVLCMGDVEVYAARGSYQLVVRKCQPQGMGALQLAFAQLQAKLQAEGLFEPERKRLLPRVPRRVAIVTSPTGAAIQDFLQAAAQRHAGIEIVLIPASVQGPGSVESLIDGMRAAHRMRPQPDVLIVSRGGGSLEDLWSFNDEQLVRAIAASRIPTVSAVGHEIDVTLADLVADVRALTPTDAASRVLPDRDSMVAALDALGQMMATNLFRRVHSERQRLENWESRPVFQNPFEMVHDRSREVDDWDERGRSAIWRRLEQAQAKLATVAAAQSALSPLAVLARGYSVTQTDAGKVVRSTGDVQPGDSLRTRLTDGDVISVVSRHESKPGNSDSA.

Residues 1 to 38 (MSDSTQFSLFDSGDDEPAKVTAPKRKVARKKRSSSSSD) are disordered. Residues 22–33 (APKRKVARKKRS) show a composition bias toward basic residues.

Belongs to the XseA family. Heterooligomer composed of large and small subunits.

Its subcellular location is the cytoplasm. The enzyme catalyses Exonucleolytic cleavage in either 5'- to 3'- or 3'- to 5'-direction to yield nucleoside 5'-phosphates.. Its function is as follows. Bidirectionally degrades single-stranded DNA into large acid-insoluble oligonucleotides, which are then degraded further into small acid-soluble oligonucleotides. This chain is Exodeoxyribonuclease 7 large subunit, found in Rhodopirellula baltica (strain DSM 10527 / NCIMB 13988 / SH1).